Here is a 205-residue protein sequence, read N- to C-terminus: MFVSTAFAQTATESQPAPAAGEHGAADAVHTETGVANDAGHGSGVFPPFDSTHYASQILWLAITFGLFYLFMSRVVLPRIGGVIETRRDRIAQDLEQAARLKQDADNAIAAYEQELTQARTKAASIAEAAREKGKGEADAERATAEAALERKLKEAEERIAAIKAKAMNDVGNIAEETTAEIVEQLLGTKADKASVTAAVKASNA.

Residues 1–15 (MFVSTAFAQTATESQ) are compositionally biased toward polar residues. Residues 1 to 26 (MFVSTAFAQTATESQPAPAAGEHGAA) are disordered. Low complexity predominate over residues 16–26 (PAPAAGEHGAA). A helical membrane pass occupies residues 56–78 (SQILWLAITFGLFYLFMSRVVLP).

This sequence belongs to the ATPase B chain family. F-type ATPases have 2 components, F(1) - the catalytic core - and F(0) - the membrane proton channel. F(1) has five subunits: alpha(3), beta(3), gamma(1), delta(1), epsilon(1). F(0) has three main subunits: a(1), b(2) and c(10-14). The alpha and beta chains form an alternating ring which encloses part of the gamma chain. F(1) is attached to F(0) by a central stalk formed by the gamma and epsilon chains, while a peripheral stalk is formed by the delta and b chains.

The protein resides in the cell inner membrane. Functionally, f(1)F(0) ATP synthase produces ATP from ADP in the presence of a proton or sodium gradient. F-type ATPases consist of two structural domains, F(1) containing the extramembraneous catalytic core and F(0) containing the membrane proton channel, linked together by a central stalk and a peripheral stalk. During catalysis, ATP synthesis in the catalytic domain of F(1) is coupled via a rotary mechanism of the central stalk subunits to proton translocation. Its function is as follows. Component of the F(0) channel, it forms part of the peripheral stalk, linking F(1) to F(0). The polypeptide is ATP synthase subunit b 1 (Brucella anthropi (strain ATCC 49188 / DSM 6882 / CCUG 24695 / JCM 21032 / LMG 3331 / NBRC 15819 / NCTC 12168 / Alc 37) (Ochrobactrum anthropi)).